A 304-amino-acid chain; its full sequence is MSDLVLTSTEAITQGSQSFATAAKLMPPGIRDDTVMLYAWCRHADDVIDGQALGSRPEAVNDPQARLDGLRADTLAALQGDGPVTPPFAALRAVARRHDFPQAWPMDLIEGFAMDVEARDYRTLDDVLEYSYHVAGIVGVMMARVMGVRDDPVLDRACDLGLAFQLTNIARDVIDDARIGRCYLPGDWLDQAGARVDGPVPSPELYTVILRLLDAAELYYASARVGLADLPPRCAWSIAAALRIYRAIGLRIRKGGPEAYRQRISTSKAAKIGLLGIGGWDVARSRLPGAGVSRQGLWTRPHHA.

This sequence belongs to the phytoene/squalene synthase family. ATP serves as cofactor. Mn(2+) is required as a cofactor. Requires Mg(2+) as cofactor.

It carries out the reaction 2 (2E,6E,10E)-geranylgeranyl diphosphate = 15-cis-phytoene + 2 diphosphate. The protein operates within carotenoid biosynthesis; astaxanthin biosynthesis. It functions in the pathway carotenoid biosynthesis; phytoene biosynthesis. In terms of biological role, involved in the biosynthesis of carotenoids for the production of astaxanthin. Catalyzes the condensation of two molecules of geranylgeranyl diphosphate (GGPP) to give prephytoene diphosphate (PPPP) and the subsequent rearrangement of the cyclopropylcarbinyl intermediate to yield 15-cis phytoene. In Paracoccus sp. (strain N81106 / MBIC 01143) (Agrobacterium aurantiacum), this protein is 15-cis-phytoene synthase (crtB).